We begin with the raw amino-acid sequence, 542 residues long: Chaperonin GroEL (542 aa).

ATP-binding positions include 29 to 32, 86 to 90, Gly413, 476 to 478, and Asp492; these read TLGP, DGTTT, and NAA.

The protein belongs to the chaperonin (HSP60) family. As to quaternary structure, forms a cylinder of 14 subunits composed of two heptameric rings stacked back-to-back. Interacts with the co-chaperonin GroES.

It localises to the cytoplasm. The enzyme catalyses ATP + H2O + a folded polypeptide = ADP + phosphate + an unfolded polypeptide.. Functionally, together with its co-chaperonin GroES, plays an essential role in assisting protein folding. The GroEL-GroES system forms a nano-cage that allows encapsulation of the non-native substrate proteins and provides a physical environment optimized to promote and accelerate protein folding. This chain is Chaperonin GroEL, found in Listeria welshimeri serovar 6b (strain ATCC 35897 / DSM 20650 / CCUG 15529 / CIP 8149 / NCTC 11857 / SLCC 5334 / V8).